The sequence spans 371 residues: Ferredoxin--NADP reductase, apicoplast (371 aa).

Residues 1–18 (MKIRFVFILSVLISGVCC) constitute an apicoplast transit peptide. FAD is bound by residues Lys68, 155–159 (ARLYS), 172–179 (AIKIHKYE), 192–194 (YCS), and Thr235. Residues 68-218 (KNPLKCKIVD…TGAHGYFNLP (151 aa)) enclose the FAD-binding FR-type domain. Lys174 serves as a coordination point for NADP(+). NADP(+) contacts are provided by residues 272 to 273 (VY), Ser302, 313 to 315 (YVQ), and 341 to 343 (HKS). Residues Lys342 and Tyr371 each contribute to the FAD site.

This sequence belongs to the ferredoxin--NADP reductase type 1 family. As to quaternary structure, monomer. Homodimer; disulfide linked. NADP binding accelerates formation of an inactive, disulfide-linked homodimer when the protein is exposed to air for 24 hours or more (in vitro); the physiological relevance of this is uncertain. The cofactor is FAD.

The protein localises to the plastid. Its subcellular location is the apicoplast. It catalyses the reaction 2 reduced [2Fe-2S]-[ferredoxin] + NADP(+) + H(+) = 2 oxidized [2Fe-2S]-[ferredoxin] + NADPH. Functionally, may play a role in the terminal step of the DOXP/MEP pathway for isoprenoid precursor biosynthesis. The sequence is that of Ferredoxin--NADP reductase, apicoplast from Plasmodium falciparum (isolate 3D7).